A 365-amino-acid chain; its full sequence is Alanine racemase (365 aa).

Lys36 (proton acceptor; specific for D-alanine) is an active-site residue. Lys36 carries the post-translational modification N6-(pyridoxal phosphate)lysine. Arg132 provides a ligand contact to substrate. Tyr257 acts as the Proton acceptor; specific for L-alanine in catalysis. A substrate-binding site is contributed by Met305.

It belongs to the alanine racemase family. Pyridoxal 5'-phosphate is required as a cofactor.

The catalysed reaction is L-alanine = D-alanine. The protein operates within amino-acid biosynthesis; D-alanine biosynthesis; D-alanine from L-alanine: step 1/1. Functionally, catalyzes the interconversion of L-alanine and D-alanine. May also act on other amino acids. This Xylella fastidiosa (strain Temecula1 / ATCC 700964) protein is Alanine racemase (alr).